The primary structure comprises 115 residues: AQIVMTQTPSSVSAAVGGTVTINCQSSQSVYENGRLSWFQQKPGQPPKRLIYRASTLASGVSSRFTGSGSGTQFTLSISDVQCDDAATYYCLGNYDCSSGDSFTFGGGTEVVVKG.

The segment at 1–24 is framework-1; sequence AQIVMTQTPSSVSAAVGGTVTINC. Positions 25–37 are complementarity-determining-1; sequence QSSQSVYENGRLS. A framework-2 region spans residues 38-52; it reads WFQQKPGQPPKRLIY. Residues 53–59 are complementarity-determining-2; the sequence is RASTLAS. The framework-3 stretch occupies residues 60–91; the sequence is GVSSRFTGSGSGTQFTLSISDVQCDDAATYYC. Residues 92–104 are complementarity-determining-3; the sequence is LGNYDCSSGDSFT. A framework-4 region spans residues 105-114; that stretch reads FGGGTEVVVK.

The polypeptide is Ig kappa chain V region 3315 (Oryctolagus cuniculus (Rabbit)).